Here is a 490-residue protein sequence, read N- to C-terminus: Beta-N-acetyl-D-glucosaminide beta-1,4-N-acetylglucosaminyl-transferase (490 aa).

Over 1-30 the chain is Cytoplasmic; that stretch reads MYLVVCWGRVTGNMISTRHCFSRCKSRSVR. A helical; Signal-anchor for type II membrane protein transmembrane segment spans residues 31–50; it reads VIKATAMLFVAAMLFLALHM. 5 N-linked (GlcNAc...) asparagine glycosylation sites follow: Asn-51, Asn-82, Asn-441, Asn-459, and Asn-485. Residues 51-490 lie on the Lumenal side of the membrane; it reads NFSHEASQQN…YLTGNFTIIS (440 aa).

This sequence belongs to the glycosyltransferase 7 family.

Its subcellular location is the golgi apparatus membrane. It catalyses the reaction an N-acetyl-beta-D-glucosaminyl derivative + UDP-N-acetyl-alpha-D-glucosamine = an N-acetyl-beta-D-glucosaminyl-(1-&gt;4)-N-acetyl-beta-D-glucosaminyl derivative + UDP + H(+). It functions in the pathway protein modification; protein glycosylation. The sequence is that of Beta-N-acetyl-D-glucosaminide beta-1,4-N-acetylglucosaminyl-transferase (GNT) from Lymnaea stagnalis (Great pond snail).